The sequence spans 570 residues: A-type ATP synthase subunit A (570 aa).

223–230 (GPFGSGKT) provides a ligand contact to ATP.

The protein belongs to the ATPase alpha/beta chains family. In terms of assembly, has multiple subunits with at least A(3), B(3), C, D, E, F, H, I and proteolipid K(x).

It is found in the cell membrane. The enzyme catalyses ATP + H2O + 4 H(+)(in) = ADP + phosphate + 5 H(+)(out). Its function is as follows. Component of the A-type ATP synthase that produces ATP from ADP in the presence of a proton gradient across the membrane. The A chain is the catalytic subunit. In Nanoarchaeum equitans (strain Kin4-M), this protein is A-type ATP synthase subunit A.